Reading from the N-terminus, the 470-residue chain is Light-independent protochlorophyllide reductase subunit N (470 aa).

[4Fe-4S] cluster is bound by residues C24, C49, and C109.

The protein belongs to the BchN/ChlN family. Protochlorophyllide reductase is composed of three subunits; ChlL, ChlN and ChlB. Forms a heterotetramer of two ChlB and two ChlN subunits. The cofactor is [4Fe-4S] cluster.

The enzyme catalyses chlorophyllide a + oxidized 2[4Fe-4S]-[ferredoxin] + 2 ADP + 2 phosphate = protochlorophyllide a + reduced 2[4Fe-4S]-[ferredoxin] + 2 ATP + 2 H2O. Its pathway is porphyrin-containing compound metabolism; chlorophyll biosynthesis (light-independent). In terms of biological role, component of the dark-operative protochlorophyllide reductase (DPOR) that uses Mg-ATP and reduced ferredoxin to reduce ring D of protochlorophyllide (Pchlide) to form chlorophyllide a (Chlide). This reaction is light-independent. The NB-protein (ChlN-ChlB) is the catalytic component of the complex. The protein is Light-independent protochlorophyllide reductase subunit N of Acaryochloris marina (strain MBIC 11017).